The following is a 156-amino-acid chain: Small ribosomal subunit protein uS7 (156 aa).

Belongs to the universal ribosomal protein uS7 family. Part of the 30S ribosomal subunit. Contacts proteins S9 and S11.

Its function is as follows. One of the primary rRNA binding proteins, it binds directly to 16S rRNA where it nucleates assembly of the head domain of the 30S subunit. Is located at the subunit interface close to the decoding center, probably blocks exit of the E-site tRNA. In Salinispora arenicola (strain CNS-205), this protein is Small ribosomal subunit protein uS7.